The chain runs to 304 residues: Non-specific ribonucleoside hydrolase RihC (304 aa).

Histidine 233 is an active-site residue.

Belongs to the IUNH family. RihC subfamily.

Functionally, hydrolyzes both purine and pyrimidine ribonucleosides with a broad-substrate specificity. In Escherichia coli O17:K52:H18 (strain UMN026 / ExPEC), this protein is Non-specific ribonucleoside hydrolase RihC.